A 419-amino-acid polypeptide reads, in one-letter code: Satellite RNA 48 kDa protein (419 aa).

A compositionally biased stretch (basic residues) spans 1–27 (MQKTMTRHLSRNRKPHEKVSHVPRRGP). The interval 1 to 66 (MQKTMTRHLS…SLGRKPYNPG (66 aa)) is disordered.

The protein belongs to the nepovirus satellite RNA 48 kDa protein family.

The chain is Satellite RNA 48 kDa protein from Allium porrum (Leek).